We begin with the raw amino-acid sequence, 417 residues long: UDP-N-acetylglucosamine 1-carboxyvinyltransferase (417 aa).

22–23 (KN) is a phosphoenolpyruvate binding site. Arginine 91 is a binding site for UDP-N-acetyl-alpha-D-glucosamine. Cysteine 115 acts as the Proton donor in catalysis. Cysteine 115 is subject to 2-(S-cysteinyl)pyruvic acid O-phosphothioketal. UDP-N-acetyl-alpha-D-glucosamine contacts are provided by residues 120–124 (RPVDQ), aspartate 304, and isoleucine 326.

It belongs to the EPSP synthase family. MurA subfamily.

The protein resides in the cytoplasm. The enzyme catalyses phosphoenolpyruvate + UDP-N-acetyl-alpha-D-glucosamine = UDP-N-acetyl-3-O-(1-carboxyvinyl)-alpha-D-glucosamine + phosphate. Its pathway is cell wall biogenesis; peptidoglycan biosynthesis. Functionally, cell wall formation. Adds enolpyruvyl to UDP-N-acetylglucosamine. This is UDP-N-acetylglucosamine 1-carboxyvinyltransferase from Desulfovibrio desulfuricans (strain ATCC 27774 / DSM 6949 / MB).